The sequence spans 543 residues: Chaperonin GroEL (543 aa).

ATP is bound by residues 29–32 (TLGP), 86–90 (DGTTT), glycine 413, 476–478 (NAA), and aspartate 492.

Belongs to the chaperonin (HSP60) family. As to quaternary structure, forms a cylinder of 14 subunits composed of two heptameric rings stacked back-to-back. Interacts with the co-chaperonin GroES.

The protein localises to the cytoplasm. The catalysed reaction is ATP + H2O + a folded polypeptide = ADP + phosphate + an unfolded polypeptide.. Functionally, together with its co-chaperonin GroES, plays an essential role in assisting protein folding. The GroEL-GroES system forms a nano-cage that allows encapsulation of the non-native substrate proteins and provides a physical environment optimized to promote and accelerate protein folding. The protein is Chaperonin GroEL of Streptococcus pyogenes serotype M1.